The primary structure comprises 1323 residues: Sister chromatid cohesion protein PDS5 homolog A-A (1323 aa).

One copy of the HEAT repeat lies at 385–421; that stretch reads FLVNDQLLGFVRERTLDKRWRVRKEAMMGLAQLYKKY. The interval 1139–1323 is disordered; it reads LNATGRRPYS…TAQRQIDLHR (185 aa). Low complexity predominate over residues 1153–1165; it reads SEISNNVSINSES. Composition is skewed to polar residues over residues 1166-1176 and 1210-1220; these read DASVANRQSSE and LDQTAPSNTGT. A compositionally biased stretch (basic and acidic residues) spans 1235 to 1246; sequence NIRKESEEKKAD.

In terms of assembly, interacts with the cohesin complex. Binds chromatin in a cohesin-dependent manner.

It is found in the nucleus. Its function is as follows. May regulate sister chromatid cohesion during mitosis and couple it to DNA replication. The polypeptide is Sister chromatid cohesion protein PDS5 homolog A-A (pds5a-a) (Xenopus laevis (African clawed frog)).